A 159-amino-acid polypeptide reads, in one-letter code: Ribosome maturation factor RimP (159 aa).

The protein belongs to the RimP family.

Its subcellular location is the cytoplasm. In terms of biological role, required for maturation of 30S ribosomal subunits. The protein is Ribosome maturation factor RimP of Streptococcus pneumoniae serotype 2 (strain D39 / NCTC 7466).